A 120-amino-acid polypeptide reads, in one-letter code: Chaperonin GroEL (120 aa).

Residue 23 to 27 participates in ATP binding; that stretch reads DGTTT.

This sequence belongs to the chaperonin (HSP60) family. Forms a cylinder of 14 subunits composed of two heptameric rings stacked back-to-back. Interacts with the co-chaperonin GroES.

It is found in the cytoplasm. The enzyme catalyses ATP + H2O + a folded polypeptide = ADP + phosphate + an unfolded polypeptide.. Together with its co-chaperonin GroES, plays an essential role in assisting protein folding. The GroEL-GroES system forms a nano-cage that allows encapsulation of the non-native substrate proteins and provides a physical environment optimized to promote and accelerate protein folding. This chain is Chaperonin GroEL, found in Mycolicibacterium chitae (Mycobacterium chitae).